Consider the following 539-residue polypeptide: Glucose-6-phosphate isomerase (539 aa).

E353 (proton donor) is an active-site residue. Residues H384 and K505 contribute to the active site.

Belongs to the GPI family.

It is found in the cytoplasm. The catalysed reaction is alpha-D-glucose 6-phosphate = beta-D-fructose 6-phosphate. It participates in carbohydrate biosynthesis; gluconeogenesis. It functions in the pathway carbohydrate degradation; glycolysis; D-glyceraldehyde 3-phosphate and glycerone phosphate from D-glucose: step 2/4. Functionally, catalyzes the reversible isomerization of glucose-6-phosphate to fructose-6-phosphate. This is Glucose-6-phosphate isomerase from Ralstonia pickettii (strain 12J).